The primary structure comprises 87 residues: Putative regulatory protein syc0519_c (87 aa).

It belongs to the RemA family.

This chain is Putative regulatory protein syc0519_c, found in Synechococcus sp. (strain ATCC 27144 / PCC 6301 / SAUG 1402/1) (Anacystis nidulans).